The chain runs to 398 residues: Secreted aspartic protease 2 (398 aa).

The signal sequence occupies residues 1–18 (MFLKNIFIALAIALLVDA). Positions 19 to 56 (TPTTTKRSAGFVALDFSVVKTPKAFPVTNGQEGKTSKR) are cleaved as a propeptide — activation peptide. The Peptidase A1 domain occupies 70–384 (YAADITVGSN…DLDDNEISLA (315 aa)). D88 is an active-site residue. Residue 88–90 (DTG) participates in pepstatin A binding. C103 and C115 are oxidised to a cystine. 141 to 142 (GD) is a binding site for pepstatin A. 2 residues coordinate Zn(2+): D247 and D270. Residue D274 is part of the active site. 274–278 (DSGTT) is a pepstatin A binding site. The cysteines at positions 312 and 350 are disulfide-linked. 2 N-linked (GlcNAc...) asparagine glycosylation sites follow: N313 and N321.

It belongs to the peptidase A1 family. As to quaternary structure, monomer.

The protein localises to the secreted. It carries out the reaction Preferential cleavage at the carboxyl of hydrophobic amino acids, but fails to cleave 15-Leu-|-Tyr-16, 16-Tyr-|-Leu-17 and 24-Phe-|-Phe-25 of insulin B chain. Activates trypsinogen, and degrades keratin.. In terms of biological role, secreted aspartic peptidases (SAPs) are a group of ten acidic hydrolases considered as key virulence factors. These enzymes supply the fungus with nutrient amino acids as well as are able to degrade the selected host's proteins involved in the immune defense. Induces host inflammatory cytokine production in a proteolytic activity-independent way. Plays a role in tissue damage during superficial infection. Moreover, acts toward human hemoglobin though limited proteolysis to generate a variety of antimicrobial hemocidins, enabling to compete with the other microorganisms of the same physiological niche using the microbicidal peptides generated from the host protein. Plays a key role in defense against host by cleaving histatin-5 (Hst 5), a peptide from human saliva that carries out fungicidal activity. The cleavage rate decreases in an order of SAP2 &gt; SAP9 &gt; SAP3 &gt; SAP7 &gt; SAP4 &gt; SAP1 &gt; SAP8. The first cleavage occurs between residues 'Lys-17' and 'His-18' of Hst 5, giving DSHAKRHHGYKRKFHEK and HHSHRGY peptides. Simultaneously, the DSHAKRHHGYKRK peptide is also formed. Further fragmentation by SAP2 results in FHEK and DSHAKRHHGY products. The chain is Secreted aspartic protease 2 from Candida albicans (strain SC5314 / ATCC MYA-2876) (Yeast).